The following is a 118-amino-acid chain: Large ribosomal subunit protein uL18 (118 aa).

This sequence belongs to the universal ribosomal protein uL18 family. Part of the 50S ribosomal subunit; part of the 5S rRNA/L5/L18/L25 subcomplex. Contacts the 5S and 23S rRNAs.

In terms of biological role, this is one of the proteins that bind and probably mediate the attachment of the 5S RNA into the large ribosomal subunit, where it forms part of the central protuberance. This is Large ribosomal subunit protein uL18 from Rickettsia bellii (strain OSU 85-389).